We begin with the raw amino-acid sequence, 184 residues long: Adenylate kinase 2 (184 aa).

Position 10-15 (10-15 (GSGKST)) interacts with ATP. Residues 30–59 (STGEILREAISHLSELGRHAQPYMIKGELV) are NMP. Residues T31, R36, 57-59 (ELV), 85-88 (GYPR), and Q92 each bind AMP. Positions 126–132 (GRSLPDD) are LID. R127 lines the ATP pocket. An AMP-binding site is contributed by R140. Residue Q168 coordinates ATP.

It belongs to the adenylate kinase family. As to quaternary structure, monomer.

The protein resides in the cytoplasm. It carries out the reaction AMP + ATP = 2 ADP. It participates in purine metabolism; AMP biosynthesis via salvage pathway; AMP from ADP: step 1/1. Catalyzes the reversible transfer of the terminal phosphate group between ATP and AMP. Plays an important role in cellular energy homeostasis and in adenine nucleotide metabolism. The protein is Adenylate kinase 2 of Nostoc sp. (strain PCC 7120 / SAG 25.82 / UTEX 2576).